The chain runs to 124 residues: Small ribosomal subunit protein uS12 (124 aa).

The residue at position 90 (aspartate 90) is a 3-methylthioaspartic acid.

The protein belongs to the universal ribosomal protein uS12 family. In terms of assembly, part of the 30S ribosomal subunit. Contacts proteins S8 and S17. May interact with IF1 in the 30S initiation complex.

Functionally, with S4 and S5 plays an important role in translational accuracy. Interacts with and stabilizes bases of the 16S rRNA that are involved in tRNA selection in the A site and with the mRNA backbone. Located at the interface of the 30S and 50S subunits, it traverses the body of the 30S subunit contacting proteins on the other side and probably holding the rRNA structure together. The combined cluster of proteins S8, S12 and S17 appears to hold together the shoulder and platform of the 30S subunit. This chain is Small ribosomal subunit protein uS12, found in Wolbachia sp. subsp. Brugia malayi (strain TRS).